We begin with the raw amino-acid sequence, 753 residues long: Polyribonucleotide nucleotidyltransferase (753 aa).

Asp-488 and Asp-494 together coordinate Mg(2+). The region spanning 555–614 (PRLLRTKISPDKIGALIGPGGKNIRGIQETTGAVIEVDDEGTVLVASSNKESAQEAMRQV) is the KH domain. One can recognise an S1 motif domain in the interval 624-692 (GKIYDGTVSS…EHDRVKLSRR (69 aa)). Acidic residues predominate over residues 698 to 719 (LGEEDPLAVEGEGGGDSEGGGD). A disordered region spans residues 698–753 (LGEEDPLAVEGEGGGDSEGGGDGEDRPRRRRGGSGGGGGGGRGRGPRRSGGGRDRD). Over residues 730-740 (GSGGGGGGGRG) the composition is skewed to gly residues.

Belongs to the polyribonucleotide nucleotidyltransferase family. It depends on Mg(2+) as a cofactor.

Its subcellular location is the cytoplasm. The catalysed reaction is RNA(n+1) + phosphate = RNA(n) + a ribonucleoside 5'-diphosphate. In terms of biological role, involved in mRNA degradation. Catalyzes the phosphorolysis of single-stranded polyribonucleotides processively in the 3'- to 5'-direction. This Rhodopirellula baltica (strain DSM 10527 / NCIMB 13988 / SH1) protein is Polyribonucleotide nucleotidyltransferase.